The sequence spans 366 residues: Flagellar P-ring protein (366 aa).

Residues 1-20 (MVIKFLSALILLLVTTAAQA) form the signal peptide.

This sequence belongs to the FlgI family. As to quaternary structure, the basal body constitutes a major portion of the flagellar organelle and consists of four rings (L,P,S, and M) mounted on a central rod.

It is found in the periplasm. It localises to the bacterial flagellum basal body. Assembles around the rod to form the L-ring and probably protects the motor/basal body from shearing forces during rotation. This Escherichia coli (strain UTI89 / UPEC) protein is Flagellar P-ring protein.